Consider the following 168-residue polypeptide: Protein OPG162 (168 aa).

At 1 to 14 the chain is on the intravirion side; sequence MKSLNRQTVSMFKK. The helical transmembrane segment at 15–37 threads the bilayer; sequence LSVPAAIMMILSTIISGIGTFLH. The Virion surface segment spans residues 38-168; the sequence is YKEELMPSAC…SVLCVKKFYK (131 aa). Positions 54-163 constitute a C-type lectin domain; the sequence is YDKHCYLDTN…CKSTQSVLCV (110 aa). 2 disulfide bridges follow: Cys75–Cys162 and Cys141–Cys154. Residue Asn133 is glycosylated (N-linked (GlcNAc...) asparagine; by host).

Belongs to the orthopoxvirus OPG162 protein family. As to quaternary structure, interacts with protein OPG161. Interacts with protein OPG164. Interacts with protein OPG190.

The protein localises to the virion membrane. The protein resides in the host Golgi apparatus. Forms a complex with OPG162 and OPG190 to coordinate the incorporation of OPG164 into wrapped enveloped virion (EV) membranes and, subsequently, the production of actin tails. Therefore plays an essential role in efficient cell-to-cell spread of viral particles. This Homo sapiens (Human) protein is Protein OPG162 (OPG162).